The following is a 147-amino-acid chain: Large ribosomal subunit protein uL13 (147 aa).

Belongs to the universal ribosomal protein uL13 family. Part of the 50S ribosomal subunit.

In terms of biological role, this protein is one of the early assembly proteins of the 50S ribosomal subunit, although it is not seen to bind rRNA by itself. It is important during the early stages of 50S assembly. The protein is Large ribosomal subunit protein uL13 of Mycolicibacterium smegmatis (strain ATCC 700084 / mc(2)155) (Mycobacterium smegmatis).